The sequence spans 919 residues: Coiled-coil domain-containing protein 66 (919 aa).

Disordered regions lie at residues 145–166 (KEET…KDEN), 456–505 (ERDR…RERE), 724–744 (ERNN…LPSP), and 762–816 (LKSD…EPSH). The segment covering 150–161 (QDSLHLNNTSNQ) has biased composition (polar residues). Positions 467 to 558 (HQKAITAQVE…EQRIRELAQK (92 aa)) form a coiled coil. A mediates localization to cilia, centrosomes and spindle microtubules and the interaction with PCM1, CEP290, CEP104 and CSPP1 region spans residues 570–919 (GGYGLDDVSG…NQEENFNSSF (350 aa)).

Homodimer; disulfide-linked. Interacts with CEP290. Interacts with PCM1. Interacts with ARMC9, TOGARAM1, CSPP1 and CEP104. Interacts with CDK5RAP2, CEP152, CEP192, TBG1 and PRC1. In terms of tissue distribution, expressed in retina and blood. Expressed in retina, mainly in photoreceptors but also in outer plexiform and ganglion cell layers (at protein level).

The protein resides in the cytoplasm. It localises to the cytoskeleton. Its subcellular location is the microtubule organizing center. The protein localises to the centrosome. It is found in the centriolar satellite. The protein resides in the cell projection. It localises to the cilium. Its subcellular location is the cilium basal body. The protein localises to the cilium axoneme. It is found in the photoreceptor inner segment. The protein resides in the photoreceptor outer segment. Its function is as follows. Microtubule-binding protein required for ciliogenesis. May function in ciliogenesis by mediating the transport of proteins like BBS4 to the cilium, but also through the organization of the centriolar satellites. Required for the assembly of signaling-competent cilia with proper structure and length. Mediates this function in part by regulating transition zone assembly and basal body recruitment of the IFT-B complex. Cooperates with the ciliopathy proteins CSPP1 and CEP104 during cilium length regulation. Plays two important roles during cell division. First, is required for mitotic progression via regulation of spindle assembly, organization and orientation, levels of spindle microtubules (MTs), kinetochore-fiber integrity, and chromosome alignment. Second, functions during cytokinesis in part by regulating assembly and organization of central spindle and midbody MTs. Plays a role in retina morphogenesis and/or homeostasis. In Canis lupus familiaris (Dog), this protein is Coiled-coil domain-containing protein 66 (CCDC66).